Consider the following 122-residue polypeptide: Urease subunit beta (122 aa).

The protein belongs to the urease beta subunit family. In terms of assembly, heterotrimer of UreA (gamma), UreB (beta) and UreC (alpha) subunits. Three heterotrimers associate to form the active enzyme.

The protein resides in the cytoplasm. It catalyses the reaction urea + 2 H2O + H(+) = hydrogencarbonate + 2 NH4(+). Its pathway is nitrogen metabolism; urea degradation; CO(2) and NH(3) from urea (urease route): step 1/1. This Acetivibrio thermocellus (strain ATCC 27405 / DSM 1237 / JCM 9322 / NBRC 103400 / NCIMB 10682 / NRRL B-4536 / VPI 7372) (Clostridium thermocellum) protein is Urease subunit beta.